Consider the following 387-residue polypeptide: Protein RecA (387 aa).

Residue 78-85 (GPESSGKT) participates in ATP binding. Residues 355–369 (KSIERDTKETKETKS) show a composition bias toward basic and acidic residues. The tract at residues 355-387 (KSIERDTKETKETKSKQPVSFSTEADGDIAVGE) is disordered.

It belongs to the RecA family.

It localises to the cytoplasm. In terms of biological role, can catalyze the hydrolysis of ATP in the presence of single-stranded DNA, the ATP-dependent uptake of single-stranded DNA by duplex DNA, and the ATP-dependent hybridization of homologous single-stranded DNAs. It interacts with LexA causing its activation and leading to its autocatalytic cleavage. This Leptospira biflexa serovar Patoc (strain Patoc 1 / ATCC 23582 / Paris) protein is Protein RecA.